A 280-amino-acid polypeptide reads, in one-letter code: uncharacterized protein (280 aa).

An HTH rpiR-type domain is found at 1–78; the sequence is MDVIQRIKEK…VLLAQSISRA (78 aa). The H-T-H motif DNA-binding region spans 37-57; sequence ISDLSEKAGVKSEASVVKFYK. The 141-residue stretch at 123 to 263 folds into the SIS domain; it reads TVDLFKNAQR…YTLLAARDPR (141 aa).

This is an uncharacterized protein from Thermotoga maritima (strain ATCC 43589 / DSM 3109 / JCM 10099 / NBRC 100826 / MSB8).